Consider the following 313-residue polypeptide: N-acetyl-gamma-glutamyl-phosphate reductase 2 (313 aa).

Cys117 is an active-site residue.

The protein belongs to the NAGSA dehydrogenase family. Type 2 subfamily.

The protein resides in the cytoplasm. The catalysed reaction is N-acetyl-L-glutamate 5-semialdehyde + phosphate + NADP(+) = N-acetyl-L-glutamyl 5-phosphate + NADPH + H(+). Its pathway is amino-acid biosynthesis; L-arginine biosynthesis; N(2)-acetyl-L-ornithine from L-glutamate: step 3/4. Its function is as follows. Catalyzes the NADPH-dependent reduction of N-acetyl-5-glutamyl phosphate to yield N-acetyl-L-glutamate 5-semialdehyde. The protein is N-acetyl-gamma-glutamyl-phosphate reductase 2 of Pseudomonas putida (strain ATCC 47054 / DSM 6125 / CFBP 8728 / NCIMB 11950 / KT2440).